The sequence spans 224 residues: PKHD-type hydroxylase KPN78578_12210 (224 aa).

One can recognise a Fe2OG dioxygenase domain in the interval 77–176 (TISAPLFNRY…RQASFLWIQS (100 aa)). H95, D97, and H157 together coordinate Fe cation. R167 is a 2-oxoglutarate binding site.

The cofactor is Fe(2+). Requires L-ascorbate as cofactor.

The chain is PKHD-type hydroxylase KPN78578_12210 from Klebsiella pneumoniae subsp. pneumoniae (strain ATCC 700721 / MGH 78578).